The primary structure comprises 1642 residues: Cholesterol transporter ABCA5 (1642 aa).

Residues 32–52 (SVQEILFPLFFLFWLILISMM) traverse the membrane as a helical segment. N86 carries N-linked (GlcNAc...) asparagine glycosylation. 6 helical membrane passes run 220–240 (VILIYLVIAFSPFGYFLAIHI), 264–284 (LSWVLLYTSLIFLMSLLMAVI), 297–317 (IVIFLLFFLYGLSSVFFALML), 328–348 (GIVEFFVTVAFGFIGLMIILI), 355–375 (LVWLFSPFCHCTFVIGIAQVM), and 396–416 (LIITIIMLTLNSIFYVLLAVY). N458 is a glycosylation site (N-linked (GlcNAc...) asparagine). Positions 478-713 (IRISGIQKTY…WGIGYRLSMY (236 aa)) constitute an ABC transporter 1 domain. 514-521 (GHSGTGKS) serves as a coordination point for ATP. 2 consecutive transmembrane segments (helical) span residues 866 to 886 (LLLLLIFFTVQIFMFLVHHSF) and 967 to 987 (VFAAVFNSTMVYSLPILVNII). N-linked (GlcNAc...) asparagine glycosylation is present at N996. Helical transmembrane passes span 1021–1041 (LYFQAALLGIIVTAMPPYFAM), 1071–1091 (VVDIPLFFIILILMLGSLLAF), 1102–1122 (FLAVVFCLIGYVPSVILFTYI), 1139–1159 (FIYSVAALACIAITEITFFMG), 1169–1189 (AFCIIIPIYPLLGCLISFIKI), and 1207–1227 (LSVAVISPYLQCVLWIFLLQY). The interval 1249–1268 (KSKNRKLPEPPDNEDEDEDV) is disordered. Residues 1259–1268 (PDNEDEDEDV) show a composition bias toward acidic residues. The 244-residue stretch at 1290–1533 (IMVSNLHKEY…FGKGYFLEIK (244 aa)) folds into the ABC transporter 2 domain. ATP is bound at residue 1333-1340 (GPNGAGKS).

It belongs to the ABC transporter superfamily. ABCA family. N-glycosylated. Ubiquitously expressed. Highly expressed in testis, skeletal muscle, kidney, liver and placenta. Expressed in both the epithelial and mesenchymal compartments, present within the outer root sheath (ORS) of the hair follicle as well as dermal sheath. Expressed in multiple regions of the brain, including the hippocampus, superior frontal and inferior temporal cortices. Strongly expressed in neurons and moderately in microglia, with only weak expression in astrocytes and oligodendrocytes.

Its subcellular location is the golgi apparatus membrane. The protein localises to the lysosome membrane. It localises to the late endosome membrane. It is found in the cell membrane. It catalyses the reaction cholesterol(in) + ATP + H2O = cholesterol(out) + ADP + phosphate + H(+). In terms of biological role, cholesterol efflux transporter in macrophages that is responsible for APOAI/high-density lipoproteins (HDL) formation at the plasma membrane under high cholesterol levels and participates in reverse cholesterol transport. May play a role in the processing of autolysosomes. This Homo sapiens (Human) protein is Cholesterol transporter ABCA5.